Consider the following 404-residue polypeptide: Glucose-1-phosphate adenylyltransferase (404 aa).

Alpha-D-glucose 1-phosphate contacts are provided by residues Tyr99, Gly164, Glu179 to Lys180, and Ser197.

Belongs to the bacterial/plant glucose-1-phosphate adenylyltransferase family.

The catalysed reaction is alpha-D-glucose 1-phosphate + ATP + H(+) = ADP-alpha-D-glucose + diphosphate. Its pathway is capsule biogenesis; capsule polysaccharide biosynthesis. It participates in glycan biosynthesis; glycogen biosynthesis. In terms of biological role, involved in the biosynthesis of ADP-glucose, a building block, required in the biosynthesis of maltose-1-phosphate (M1P) and in the elongation reactions to produce linear alpha-1,4-glucans. Catalyzes the reaction between ATP and alpha-D-glucose 1-phosphate (G1P) to produce pyrophosphate and ADP-Glc. This chain is Glucose-1-phosphate adenylyltransferase, found in Mycobacterium ulcerans (strain Agy99).